A 72-amino-acid chain; its full sequence is UPF0270 protein KPK_0377 (72 aa).

It belongs to the UPF0270 family.

The polypeptide is UPF0270 protein KPK_0377 (Klebsiella pneumoniae (strain 342)).